The following is a 296-amino-acid chain: Ribosomal RNA small subunit methyltransferase H (296 aa).

S-adenosyl-L-methionine is bound by residues 41–43 (GGY), Asp-59, Phe-86, Asp-104, and Gln-111.

This sequence belongs to the methyltransferase superfamily. RsmH family.

The protein localises to the cytoplasm. It catalyses the reaction cytidine(1402) in 16S rRNA + S-adenosyl-L-methionine = N(4)-methylcytidine(1402) in 16S rRNA + S-adenosyl-L-homocysteine + H(+). Its function is as follows. Specifically methylates the N4 position of cytidine in position 1402 (C1402) of 16S rRNA. In Neorickettsia sennetsu (strain ATCC VR-367 / Miyayama) (Ehrlichia sennetsu), this protein is Ribosomal RNA small subunit methyltransferase H.